We begin with the raw amino-acid sequence, 183 residues long: Large ribosomal subunit protein uL6 (183 aa).

The protein belongs to the universal ribosomal protein uL6 family. Part of the 50S ribosomal subunit.

Its function is as follows. This protein binds to the 23S rRNA, and is important in its secondary structure. It is located near the subunit interface in the base of the L7/L12 stalk, and near the tRNA binding site of the peptidyltransferase center. This Chlamydia muridarum (strain MoPn / Nigg) protein is Large ribosomal subunit protein uL6.